Here is a 408-residue protein sequence, read N- to C-terminus: Putative mannan endo-1,4-beta-mannosidase 4 (408 aa).

The signal sequence occupies residues 1 to 23 (MKCLCFIVLLAIVIAQSYVGVEA). N73 is a glycosylation site (N-linked (GlcNAc...) asparagine). Positions 85 and 201 each coordinate substrate. Catalysis depends on E202, which acts as the Proton donor. Catalysis depends on E322, which acts as the Nucleophile. W364 serves as a coordination point for substrate.

It belongs to the glycosyl hydrolase 5 (cellulase A) family.

The protein localises to the secreted. The catalysed reaction is Random hydrolysis of (1-&gt;4)-beta-D-mannosidic linkages in mannans, galactomannans and glucomannans.. In Arabidopsis thaliana (Mouse-ear cress), this protein is Putative mannan endo-1,4-beta-mannosidase 4 (MAN4).